The chain runs to 190 residues: Xanthine phosphoribosyltransferase (190 aa).

The xanthine site is built by leucine 20 and asparagine 27. Alanine 128 to alanine 132 is a binding site for 5-phospho-alpha-D-ribose 1-diphosphate. Lysine 156 provides a ligand contact to xanthine.

Belongs to the purine/pyrimidine phosphoribosyltransferase family. Xpt subfamily. Homodimer.

The protein resides in the cytoplasm. It catalyses the reaction XMP + diphosphate = xanthine + 5-phospho-alpha-D-ribose 1-diphosphate. Its pathway is purine metabolism; XMP biosynthesis via salvage pathway; XMP from xanthine: step 1/1. In terms of biological role, converts the preformed base xanthine, a product of nucleic acid breakdown, to xanthosine 5'-monophosphate (XMP), so it can be reused for RNA or DNA synthesis. This chain is Xanthine phosphoribosyltransferase, found in Pediococcus pentosaceus (strain ATCC 25745 / CCUG 21536 / LMG 10740 / 183-1w).